The primary structure comprises 1353 residues: Xanthine dehydrogenase (1353 aa).

The 2Fe-2S ferredoxin-type domain maps to 17–104; that stretch reads STLIFFVNGK…GSAVTTVEGI (88 aa). 8 residues coordinate [2Fe-2S] cluster: Cys-56, Cys-61, Cys-64, Cys-86, Cys-126, Cys-129, Cys-161, and Cys-163. In terms of domain architecture, FAD-binding PCMH-type spans 245–434; sequence YKGERATWYR…VGLYFPKTLE (190 aa). FAD contacts are provided by residues 273–280, Phe-353, 363–367, Asp-376, Leu-424, and Lys-442; these read LVVGNTEI and SLGGN. Mo-molybdopterin-binding residues include Gln-790 and Phe-821. Substrate-binding residues include Glu-825 and Arg-903. Arg-935 provides a ligand contact to Mo-molybdopterin. Phe-937 lines the substrate pocket. Residue Ala-1102 coordinates Mo-molybdopterin. Glu-1285 acts as the Proton acceptor in catalysis.

The protein belongs to the xanthine dehydrogenase family. As to quaternary structure, homodimer. Requires FAD as cofactor. It depends on Mo-molybdopterin as a cofactor. [2Fe-2S] cluster serves as cofactor.

Its subcellular location is the peroxisome. It catalyses the reaction xanthine + NAD(+) + H2O = urate + NADH + H(+). The enzyme catalyses hypoxanthine + NAD(+) + H2O = xanthine + NADH + H(+). In terms of biological role, key enzyme in purine degradation. Catalyzes the oxidation of hypoxanthine to xanthine. Catalyzes the oxidation of xanthine to uric acid. In Calliphora vicina (Blue blowfly), this protein is Xanthine dehydrogenase (XDH).